We begin with the raw amino-acid sequence, 682 residues long: MSTIDTTEKRERGDAALFDAAVLVAAMRAAFAKLAPRHLLRSPVMAVVMGGTVLAAVITASGHSHAGFGWAVTAILFVTVLFGNFAEAIAEARGRGQAASLRRARKDLVARRVETALGGRETRVPAAELRPGDYVMVSEGEFVPADGEIVRGVATINEAAVTGESAPVLREAGTDRSGVIGGTRVLSDEIVFKVTAEPGHSFLDRMIALVEGANRQKTPNEIALTLLLAAMTLTFLIVVASLPAIAGFVGVTLDPLLLIALLVCLIPTTIGGLLPAIGIAGMNRALSANVLAKSGKAVEVAGDVDVLLLDKTGTITYGDRQATAFHPLAGVDRVQLRDAAMLASLADPTPEGKSIVKLARQQGAIAVEAEGGDFIAFTAQTRMSGVDIGGRSIRKGAGDSIVAYVQAQGATVSPELQGRIEEVARGGATPLVVAEGRHVLGVVELSDVVKQGIKEKFAQLRAMGIKTVMITGDNPLTAAAIAAEAGVDDYIAQARPEDKLARIRAEQTGGRLVAMVGDGTNDAPALAQADVGLAMNSGTQAAKEAGNMVDLDSDPAKLLAVVEVGKQQLITRGALTTFSLANDVSKYFAILPALFAAAIPSMAALNVMQLSSPRHAVLAALIFNALIIPALIPLALRGVRFRPSSATALLRRNMMIYGVGGVLLPFAAIKAIDLALVAVLGA.

Transmembrane regions (helical) follow at residues 15–35, 42–62, 66–86, 233–253, and 257–277; these read AALFDAAVLVAAMRAAFAKLA, SPVMAVVMGGTVLAAVITASG, AGFGWAVTAILFVTVLFGNFA, LTFLIVVASLPAIAGFVGVTL, and LLIALLVCLIPTTIGGLLPAI. Catalysis depends on D310, which acts as the 4-aspartylphosphate intermediate. Residues D347, E351, 377–384, and K395 contribute to the ATP site; that span reads FTAQTRMS. Mg(2+)-binding residues include D518 and D522. Transmembrane regions (helical) follow at residues 588-608, 616-636, and 662-682; these read FAILPALFAAAIPSMAALNVM, AVLAALIFNALIIPALIPLAL, and VLLPFAAIKAIDLALVAVLGA.

It belongs to the cation transport ATPase (P-type) (TC 3.A.3) family. Type IA subfamily. As to quaternary structure, the system is composed of three essential subunits: KdpA, KdpB and KdpC.

It localises to the cell inner membrane. It carries out the reaction K(+)(out) + ATP + H2O = K(+)(in) + ADP + phosphate + H(+). Part of the high-affinity ATP-driven potassium transport (or Kdp) system, which catalyzes the hydrolysis of ATP coupled with the electrogenic transport of potassium into the cytoplasm. This subunit is responsible for energy coupling to the transport system and for the release of the potassium ions to the cytoplasm. The polypeptide is Potassium-transporting ATPase ATP-binding subunit (Xanthomonas axonopodis pv. citri (strain 306)).